The following is a 475-amino-acid chain: Pentatricopeptide repeat-containing protein At1g29710, mitochondrial (475 aa).

The N-terminal 37 residues, 1-37 (MVRLWCGKLRLWKPYLALATQSRNSWFCSGGGAPSHH), are a transit peptide targeting the mitochondrion. PPR repeat units follow at residues 83-117 (AQNVTIETFDSLCIQGNWREAVEVLDYLENKGYAM), 118-148 (DLIRLLGLAKLCGKPEALEAARVVHECIIAL), 153-183 (DVGARNAIIEMYSGCCSVDDALKVFEEMPEW), 184-218 (NSGTLCVMMRCFVNNGYGEEAIDLFTRFKEEGNKP), 219-254 (NGEIFNQVFSTCTLTGDVKEGSLQFQAMYREYGIVP), and 255-285 (SMEHYHSVTKMLATSGHLDEALNFVERMPME). Positions 350–380 (YFYSTFRPVDSSHPQMNIIYETLMSLRSQLK) are type E(+) motif. The tract at residues 381 to 475 (EMGYVPDTRY…NGVCRCNNLW (95 aa)) is type DYW motif.

Belongs to the PPR family. PCMP-H subfamily.

The protein localises to the mitochondrion. The polypeptide is Pentatricopeptide repeat-containing protein At1g29710, mitochondrial (PCMP-H67) (Arabidopsis thaliana (Mouse-ear cress)).